The chain runs to 213 residues: NADH-quinone oxidoreductase subunit B (213 aa).

[4Fe-4S] cluster-binding residues include C38, C39, C104, and C133. The segment at 172-213 (IMPENTNRFPGQLEKPKTSTLTLEAPDADDAEEASTPEPVAA) is disordered. Positions 197-206 (PDADDAEEAS) are enriched in acidic residues.

This sequence belongs to the complex I 20 kDa subunit family. As to quaternary structure, NDH-1 is composed of 14 different subunits. Subunits NuoB, C, D, E, F, and G constitute the peripheral sector of the complex. [4Fe-4S] cluster serves as cofactor.

Its subcellular location is the cell inner membrane. The enzyme catalyses a quinone + NADH + 5 H(+)(in) = a quinol + NAD(+) + 4 H(+)(out). Functionally, NDH-1 shuttles electrons from NADH, via FMN and iron-sulfur (Fe-S) centers, to quinones in the respiratory chain. The immediate electron acceptor for the enzyme in this species is believed to be a menaquinone. Couples the redox reaction to proton translocation (for every two electrons transferred, four hydrogen ions are translocated across the cytoplasmic membrane), and thus conserves the redox energy in a proton gradient. The protein is NADH-quinone oxidoreductase subunit B (nuoB) of Salinibacter ruber (strain DSM 13855 / M31).